A 275-amino-acid chain; its full sequence is Membrane protein insertase MisCB (275 aa).

Positions 1–18 (MLKTYQKLLAMGIFLIVL) are cleaved as a signal peptide. Cys-19 is lipidated: N-palmitoyl cysteine. Cys-19 is lipidated: S-diacylglycerol cysteine. 5 helical membrane passes run 63–83 (YGLS…PLFV), 139–159 (AMGC…YYAI), 172–192 (WFSL…MYFV), 219–239 (LMVF…PAAL), and 240–260 (PLYW…LQMT).

The protein belongs to the OXA1/ALB3/YidC family. Type 2 subfamily. In terms of assembly, mostly monomeric, it may also form dimers. Interacts with SpoIIIAE. Forms a complex with the F(1)F(0) ATP synthase in which can be found the alpha, beta, gamma, delta and epsilon subunits of F(1) and a, b and subunits of F(0). YqgA is found in the same complex.

It is found in the cell membrane. Its function is as follows. Required for the insertion and/or proper folding and/or complex formation of integral membrane proteins into the membrane. Involved in integration of membrane proteins that insert both dependently and independently of the Sec translocase complex, as well as at least some lipoproteins. Also involved in protein secretion processes. It has an overlapping, although partly distinct, function compared to SpoIIIJ(MisCB). This is Membrane protein insertase MisCB (misCB) from Bacillus subtilis (strain 168).